The primary structure comprises 305 residues: HPr kinase/phosphorylase (305 aa).

Active-site residues include histidine 138 and lysine 159. 153–160 lines the ATP pocket; that stretch reads GESGIGKS. Serine 160 contributes to the Mg(2+) binding site. The Proton acceptor; for phosphorylation activity. Proton donor; for dephosphorylation activity role is filled by aspartate 177. The tract at residues 201-210 is important for the catalytic mechanism of both phosphorylation and dephosphorylation; that stretch reads IEIRGIGILD. Glutamate 202 serves as a coordination point for Mg(2+). Arginine 243 is an active-site residue. The important for the catalytic mechanism of dephosphorylation stretch occupies residues 264-269; it reads PVRPGR.

The protein belongs to the HPrK/P family. In terms of assembly, homohexamer. Requires Mg(2+) as cofactor.

The enzyme catalyses [HPr protein]-L-serine + ATP = [HPr protein]-O-phospho-L-serine + ADP + H(+). It carries out the reaction [HPr protein]-O-phospho-L-serine + phosphate + H(+) = [HPr protein]-L-serine + diphosphate. In terms of biological role, catalyzes the ATP- as well as the pyrophosphate-dependent phosphorylation of a specific serine residue in HPr, a phosphocarrier protein of the phosphoenolpyruvate-dependent sugar phosphotransferase system (PTS). HprK/P also catalyzes the pyrophosphate-producing, inorganic phosphate-dependent dephosphorylation (phosphorolysis) of seryl-phosphorylated HPr (P-Ser-HPr). The two antagonistic activities of HprK/P are regulated by several intracellular metabolites, which change their concentration in response to the absence or presence of rapidly metabolisable carbon sources (glucose, fructose, etc.) in the growth medium. Therefore, by controlling the phosphorylation state of HPr, HPrK/P is a sensor enzyme that plays a major role in the regulation of carbon metabolism and sugar transport: it mediates carbon catabolite repression (CCR), and regulates PTS-catalyzed carbohydrate uptake and inducer exclusion. The polypeptide is HPr kinase/phosphorylase (Thermoanaerobacter pseudethanolicus (strain ATCC 33223 / 39E) (Clostridium thermohydrosulfuricum)).